A 792-amino-acid polypeptide reads, in one-letter code: Xaa-Pro dipeptidyl-peptidase (792 aa).

Residues Ser-363, Asp-482, and His-513 each act as charge relay system in the active site.

This sequence belongs to the peptidase S15 family. As to quaternary structure, homodimer.

Its subcellular location is the cytoplasm. It catalyses the reaction Hydrolyzes Xaa-Pro-|- bonds to release unblocked, N-terminal dipeptides from substrates including Ala-Pro-|-p-nitroanilide and (sequentially) Tyr-Pro-|-Phe-Pro-|-Gly-Pro-|-Ile.. Its function is as follows. Removes N-terminal dipeptides sequentially from polypeptides having unsubstituted N-termini provided that the penultimate residue is proline. This Lactobacillus delbrueckii subsp. lactis protein is Xaa-Pro dipeptidyl-peptidase (pepX).